A 142-amino-acid chain; its full sequence is Small ribosomal subunit protein uS9 (142 aa).

It belongs to the universal ribosomal protein uS9 family.

It localises to the cytoplasm. This is Small ribosomal subunit protein uS9 (RPS16) from Syntrichia ruralis (Great hairy screw-moss).